Reading from the N-terminus, the 324-residue chain is NADH-ubiquinone oxidoreductase chain 1 (324 aa).

A run of 8 helical transmembrane segments spans residues 10–30 (MIMT…LTLV), 76–96 (FLFI…WTPL), 107–127 (LGLL…LWSG), 143–163 (VAQT…TIML), 178–198 (PMYL…STLA), 229–249 (LFFL…ITLF), 260–280 (ELFS…FLWI), and 300–320 (FLPL…SYAG).

It belongs to the complex I subunit 1 family.

The protein localises to the mitochondrion inner membrane. The catalysed reaction is a ubiquinone + NADH + 5 H(+)(in) = a ubiquinol + NAD(+) + 4 H(+)(out). Core subunit of the mitochondrial membrane respiratory chain NADH dehydrogenase (Complex I) that is believed to belong to the minimal assembly required for catalysis. Complex I functions in the transfer of electrons from NADH to the respiratory chain. The immediate electron acceptor for the enzyme is believed to be ubiquinone. This chain is NADH-ubiquinone oxidoreductase chain 1 (MT-ND1), found in Coturnix japonica (Japanese quail).